The primary structure comprises 538 residues: Cytochrome P450 monooxygenase flvC (538 aa).

A helical membrane pass occupies residues 17 to 37 (TVLIAGLLVYWVGSAIFLAVL). Cys-478 lines the heme pocket.

It belongs to the cytochrome P450 family. It depends on heme as a cofactor.

The protein resides in the membrane. The enzyme catalyses pre-flavunoidine + reduced [NADPH--hemoprotein reductase] + O2 = 10-hydroxy-pre-flavunoidine + oxidized [NADPH--hemoprotein reductase] + H2O + H(+). Its pathway is secondary metabolite biosynthesis; terpenoid biosynthesis. Functionally, cytochrome P450 monooxygenase; part of the gene cluster that mediates the biosynthesis of flavunoidine, an alkaloidal terpenoid with a tetracyclic cage-like core connected to dimethylcadaverine via a C-N bond and acylated with 5,5-dimethyl-L-pipecolate. The tetracyclic core is synthesized by the terpene cyclase flvE and the cytochrome P450 monooxygenase flvD. The terpene cyclase flvE catalyzes the cyclization of farnesyl pyrophosphate (FPP) to form (1R,4R,5S)-(+)-acoradiene and the cytochrome P450 monooxygenase flvD is then responsible for oxidative conversion of (1R,4R,5S)-(+)-acoradiene into the tetracyclic cage present in the final product flavunoidine. In parallel, the N-methyltransferase flvH dimethylates L-lysine to give N,N-dimethyl-L-Lysin which is decarboxylated by flvG to afford dimethylcadaverine. The terpene cyclase-like protein flvF is the enzyme that attaches the dimethylcadaverine precusor at the C-7 of the tetracyclic cage to yield pre-flavunoidine. The cytochrome monooxygenase flvC hydroxylates the C-10 position of pre-flavunoidine whereas the NRPS flvI acylates the terpenoid core at the hydroxylated C-10 with dimethylpipecolate to yield final flavunoidine. The bifunctional enzyme flvA and the dehydrogenase flvB are responsible for the synthesis of the dimethylpipecolate precursor. The PLP-dependent lyase domain of flvA might use L-O-acetyl-homoserine and alpha-keto-isovalerate to form an intermediary ketone that can cyclize intramolecularly to yield an imine. The imine can be reduced by flvB to yield the 6-carboxylated pipecolate. The C-terminal alpha-KG-dependent oxygenase domain of flvA is then proposed to catalyze the decarboxylation to yield dimethylpipecolate. The chain is Cytochrome P450 monooxygenase flvC from Aspergillus flavus (strain ATCC 200026 / FGSC A1120 / IAM 13836 / NRRL 3357 / JCM 12722 / SRRC 167).